A 315-amino-acid chain; its full sequence is L-lactate dehydrogenase (315 aa).

3 residues coordinate NAD(+): Val-14, Asp-35, and Tyr-66. Substrate contacts are provided by residues Gln-83, Arg-89, and 121–124; that span reads NPVD. NAD(+)-binding positions include 119 to 121 and Ser-144; that span reads VAN. 149–152 serves as a coordination point for substrate; the sequence is DTAR. Catalysis depends on His-176, which acts as the Proton acceptor. Phosphotyrosine is present on Tyr-221. A substrate-binding site is contributed by Thr-230.

Belongs to the LDH/MDH superfamily. LDH family. In terms of assembly, homotetramer.

The protein resides in the cytoplasm. It carries out the reaction (S)-lactate + NAD(+) = pyruvate + NADH + H(+). The protein operates within fermentation; pyruvate fermentation to lactate; (S)-lactate from pyruvate: step 1/1. In terms of biological role, catalyzes the conversion of lactate to pyruvate. The chain is L-lactate dehydrogenase from Mesomycoplasma hyopneumoniae (strain 7448) (Mycoplasma hyopneumoniae).